The following is a 241-amino-acid chain: Carboxy-S-adenosyl-L-methionine synthase 1 (241 aa).

S-adenosyl-L-methionine is bound by residues Tyr37, 61–63 (GCS), Asn131, and Arg198.

This sequence belongs to the class I-like SAM-binding methyltransferase superfamily. Cx-SAM synthase family. Homodimer.

The catalysed reaction is prephenate + S-adenosyl-L-methionine = carboxy-S-adenosyl-L-methionine + 3-phenylpyruvate + H2O. In terms of biological role, catalyzes the conversion of S-adenosyl-L-methionine (SAM) to carboxy-S-adenosyl-L-methionine (Cx-SAM). The chain is Carboxy-S-adenosyl-L-methionine synthase 1 from Yersinia pseudotuberculosis serotype IB (strain PB1/+).